We begin with the raw amino-acid sequence, 595 residues long: Neuroepithelial cell-transforming gene 1 protein (595 aa).

Met-1 is subject to N-acetylmethionine. The disordered stretch occupies residues 1 to 42 (MEPEPAAQKQPRPRRRSRRVSMLSEEPAAGLPADTPGPAANE). Residues 1–74 (MEPEPAAQKQ…LKRKRREKDD (74 aa)) form a necessary for nuclear localization region. The Nuclear localization signal signature appears at 12 to 19 (RPRRRSRR). At Ser-21 the chain carries Phosphoserine. The Nuclear localization signal motif lies at 66 to 72 (KRKRREK). 3 positions are modified to phosphoserine: Ser-100, Ser-106, and Ser-122. The segment at 127–151 (GDHRSPASAQKSFSRSTVPTPTKRR) is disordered. Polar residues predominate over residues 133-146 (ASAQKSFSRSTVPT). The DH domain maps to 174-356 (KRQEAIYELS…QGVLSDINLK (183 aa)). The 116-residue stretch at 386-501 (VLLCHGELKN…WFNCIRAAIA (116 aa)) folds into the PH domain. The residue at position 508 (Ser-508) is a Phosphoserine. Residues 555–595 (CGSSVQTVEDTRNMKAQRPQPGLRRARDKAQSGGKKKETLV) form a disordered region.

Interacts with RHOA in its GTP- and GDP-bound states, and with CDC42 in its GTP-bound state. Interacts with the PDZ 1 domain of BAIAP1.

Its subcellular location is the cytoplasm. The protein resides in the nucleus. Functionally, acts as a guanine nucleotide exchange factor (GEF) for RhoA GTPase. May be involved in activation of the SAPK/JNK pathway. Stimulates genotoxic stress-induced RHOB activity in breast cancer cells leading to their cell death. The polypeptide is Neuroepithelial cell-transforming gene 1 protein (Net1) (Mus musculus (Mouse)).